The sequence spans 184 residues: Probable RNA 2'-phosphotransferase (184 aa).

Belongs to the KptA/TPT1 family.

In terms of biological role, removes the 2'-phosphate from RNA via an intermediate in which the phosphate is ADP-ribosylated by NAD followed by a presumed transesterification to release the RNA and generate ADP-ribose 1''-2''-cyclic phosphate (APPR&gt;P). May function as an ADP-ribosylase. The chain is Probable RNA 2'-phosphotransferase from Escherichia coli O139:H28 (strain E24377A / ETEC).